Reading from the N-terminus, the 564-residue chain is Potassium-transporting ATPase potassium-binding subunit (564 aa).

10 helical membrane-spanning segments follow: residues 7 to 27 (LLILAFLVLLLAPAPWLGRFF), 67 to 87 (AWALLAFNLAGFVVLFAMLML), 135 to 155 (VGLTVQNFVSAATGLAVLVAL), 179 to 199 (LYALLPISIVLAVFLVWQGVP), 258 to 278 (FELVSILLIPAALVFTFGHYV), 286 to 306 (AILGCMLALLLIGGAVSLWAE), 382 to 402 (VGLNGMVLNVLIAVFLAGLMI), 420 to 440 (LLVATLLVMPVGVLVLGAIAA), 487 to 507 (LMLSLAIFIGRFGYILPVLAL), and 528 to 548 (GLLFVTLLTVTILLVGGLTFL).

It belongs to the KdpA family. In terms of assembly, the system is composed of three essential subunits: KdpA, KdpB and KdpC.

The protein localises to the cell inner membrane. Its function is as follows. Part of the high-affinity ATP-driven potassium transport (or Kdp) system, which catalyzes the hydrolysis of ATP coupled with the electrogenic transport of potassium into the cytoplasm. This subunit binds the periplasmic potassium ions and delivers the ions to the membrane domain of KdpB through an intramembrane tunnel. This Pseudomonas syringae pv. tomato (strain ATCC BAA-871 / DC3000) protein is Potassium-transporting ATPase potassium-binding subunit.